A 518-amino-acid chain; its full sequence is Light-independent protochlorophyllide reductase subunit B (518 aa).

D36 contributes to the [4Fe-4S] cluster binding site. The active-site Proton donor is D285. Position 420–421 (420–421) interacts with substrate; it reads GL.

It belongs to the ChlB/BchB/BchZ family. As to quaternary structure, protochlorophyllide reductase is composed of three subunits; BchL, BchN and BchB. Forms a heterotetramer of two BchB and two BchN subunits. The cofactor is [4Fe-4S] cluster.

It catalyses the reaction chlorophyllide a + oxidized 2[4Fe-4S]-[ferredoxin] + 2 ADP + 2 phosphate = protochlorophyllide a + reduced 2[4Fe-4S]-[ferredoxin] + 2 ATP + 2 H2O. It participates in porphyrin-containing compound metabolism; bacteriochlorophyll biosynthesis (light-independent). Component of the dark-operative protochlorophyllide reductase (DPOR) that uses Mg-ATP and reduced ferredoxin to reduce ring D of protochlorophyllide (Pchlide) to form chlorophyllide a (Chlide). This reaction is light-independent. The NB-protein (BchN-BchB) is the catalytic component of the complex. This is Light-independent protochlorophyllide reductase subunit B from Bradyrhizobium sp. (strain ORS 278).